The sequence spans 33 residues: Pardaxin P-3 (33 aa).

The protein belongs to the pardaxin family. In terms of assembly, in aqueous solution exists as a tetramer.

It localises to the secreted. The protein resides in the target cell membrane. Its function is as follows. Exhibits unusual shark repellent and surfactant properties. Forms voltage-dependent, ion-permeable channels in membranes. At high concentration causes cell membrane lysis. This Pardachirus pavoninus (Peacock sole) protein is Pardaxin P-3.